A 439-amino-acid chain; its full sequence is MLTIATLHVALQVFGAFSPSHAAAVTLEHRSARDGNSVAVPANWDVYGYLFNVTVGSPPQNITMLSDMTWMAPFVRSGRCLGQFNPELCVAQGQSFFNEHNSTTFANTTFAQATWPVTAFAPNFTVDYGRDKFCIGEICNKDTLMQVSDFPYPGSVVPVIPFGGIFGLAPTPEAITATSEPVNFQAWKNGKMGPLVGWHTCEVLKSAATCQGGDAQLVFGGTDTTMYSAKKLQSYEIQNPEWLSDAFYPSTPPRSNYWSTSLTGMWIRTDKLSKNYAVPFKAVKTAKRTPPLAVVDEGSEGLGAPLSLNGYKYLVRHIKSAKLASKAIVQNIQQQGSSGYNTADQDWYTVACDGLHEYPDLVYQLDGRKKYTISAGDYVTKLTDMPGSVCYLNINVWKYGRTENGDARVVLLGRAFLKRKYLVLNFEDRSFGLAPLRTG.

An N-terminal signal peptide occupies residues 1–22; sequence MLTIATLHVALQVFGAFSPSHA. The Peptidase A1 domain maps to 49–434; sequence YLFNVTVGSP…NFEDRSFGLA (386 aa). N-linked (GlcNAc...) asparagine glycosylation is found at Asn52 and Asn61. Residue Asp67 is part of the active site. N-linked (GlcNAc...) asparagine glycans are attached at residues Asn101, Asn107, and Asn123. Asp296 is an active-site residue. An intrachain disulfide couples Cys352 to Cys390.

Belongs to the peptidase A1 family.

It is found in the secreted. Functionally, secreted aspartic protease; part of the gene cluster that mediates the biosynthesis of the mycotoxin fusarin C. Within the cluster, FUS1, FUS2, FUS8 and FUS9 are sufficient for fusarin production. The other FUS cluster members are not essential for fusarin C biosynthesis. In Gibberella moniliformis (strain M3125 / FGSC 7600) (Maize ear and stalk rot fungus), this protein is Secreted aspartic protease FUS4.